The following is a 685-amino-acid chain: Cilia- and flagella-associated protein 36 (685 aa).

The segment at 1–20 (MLRRFSKKNKNPEGGSDDAS) is disordered. Residues 197-242 (SEELEMMAQNSRIQREALEQEIRKEEILLQQALDEGARAQNQNQNQ) are a coiled coil. The segment covering 287–310 (TGTMTSSTGVSVGTLTNTGVSSGT) has biased composition (low complexity). A disordered region spans residues 287 to 573 (TGTMTSSTGV…LRGNKYDGDV (287 aa)). A compositionally biased stretch (basic and acidic residues) spans 363 to 372 (EAEKSKRERP). The segment covering 410 to 434 (GTTSKKSIATVTASPEMSSKTTQME) has biased composition (polar residues). Composition is skewed to basic and acidic residues over residues 439–456 (GEGK…ERKY) and 508–557 (HEPR…ESKP).

The protein belongs to the CFAP36 family. As to expression, expressed in amphid and phasmid ciliated neurons.

It is found in the cell projection. It localises to the cilium. Its subcellular location is the cytoplasm. The protein localises to the cytoskeleton. The protein resides in the cilium axoneme. The chain is Cilia- and flagella-associated protein 36 from Caenorhabditis elegans.